The chain runs to 312 residues: Aspartate carbamoyltransferase catalytic subunit (312 aa).

Carbamoyl phosphate-binding residues include Arg58 and Thr59. Lys86 contacts L-aspartate. 3 residues coordinate carbamoyl phosphate: Arg108, His136, and Gln139. Residues Arg169 and Arg223 each contribute to the L-aspartate site. Carbamoyl phosphate is bound by residues Gly264 and Pro265.

The protein belongs to the aspartate/ornithine carbamoyltransferase superfamily. ATCase family. Heterododecamer (2C3:3R2) of six catalytic PyrB chains organized as two trimers (C3), and six regulatory PyrI chains organized as three dimers (R2).

The enzyme catalyses carbamoyl phosphate + L-aspartate = N-carbamoyl-L-aspartate + phosphate + H(+). It participates in pyrimidine metabolism; UMP biosynthesis via de novo pathway; (S)-dihydroorotate from bicarbonate: step 2/3. Catalyzes the condensation of carbamoyl phosphate and aspartate to form carbamoyl aspartate and inorganic phosphate, the committed step in the de novo pyrimidine nucleotide biosynthesis pathway. The sequence is that of Aspartate carbamoyltransferase catalytic subunit from Acetivibrio thermocellus (strain ATCC 27405 / DSM 1237 / JCM 9322 / NBRC 103400 / NCIMB 10682 / NRRL B-4536 / VPI 7372) (Clostridium thermocellum).